The chain runs to 920 residues: MSLLTQIFGSRNQRLLKQYQKTVREINALEPALEQLSDEALKAKTPEFKERLAKGEDIDKLLPEAFAVCREASKRILKMRHFDVQLIGGMALHYGKIAEMGTGEGKTLMATLPAYLNALAAKGVHVVTVNDYLAQRDAEWMSTLYGWLGLTTGINLSQIDHEAKQTAYNADITYGTNNEFGFDYLRDNMVYDTGDRVQRGLHYAIVDEVDSILIDEARTPLIISGQAENHTDLYHKINEVPPLLSLQIGEETPDGKGKIEVPGDYTKDEKSHQVLLTEAGHEKAEQILTRMGLLPEGASLYDAANITLIHHLYAALRAHTLYHKDQHYVVQNGEVVIVDEFTGRLMTGRRWSEGLHQAVEAKEHVKIQNENQTLASITFQNYFRMYSKLSGMTGTADTEAYEFQEIYKLETVVIPPNRPSQRKDRQDQVYKSSDEKYGAMLKDIQDCYERGQPVLVGTTSIENSELLSGILTKAKLPHNVLNAKQHAREAEIIAQAGRPKAITIATNMAGRGTDIVLGGNVAKQVQIIEANDALSDADKAAQAQKLREEWQSLHDHVVNAGGLHIIGTERHESRRVDNQLRGRSGRQGDPGSSRFYLSLDDALLRIFAGDRVRAIMDRLKMPEGEPIEAGIVSRSIESAQRKVEARNFDIRKQLLEYDDVANDQRKVIYQQRNELLETTDVSEMITSLRQGVFSDLFRTYVPEQSMEEQWDLPGLDAVLRDEWKLDFSLAKVLEAEPTITDEEMLERLLKFTDDVYAEKIEIVGKEAFAGFERSVMLQAVDSHWREHLAALDHLRQGIHLRGYAQKNPKQEYKREAFELFGQMLNLIKDEVVKIVMTVRIQSREEIDAAEEQLSQSHVENVHYQHADFDADAAPEELLAPTAVASEANQTQVNALPKVGRNDPCPCGSGKKYKQCHGRLA.

ATP contacts are provided by residues glutamine 85, glycine 103–threonine 107, and aspartate 514. 4 residues coordinate Zn(2+): cysteine 904, cysteine 906, cysteine 915, and histidine 916.

The protein belongs to the SecA family. In terms of assembly, monomer and homodimer. Part of the essential Sec protein translocation apparatus which comprises SecA, SecYEG and auxiliary proteins SecDF-YajC and YidC. Zn(2+) is required as a cofactor.

Its subcellular location is the cell inner membrane. The protein resides in the cytoplasm. The enzyme catalyses ATP + H2O + cellular proteinSide 1 = ADP + phosphate + cellular proteinSide 2.. In terms of biological role, part of the Sec protein translocase complex. Interacts with the SecYEG preprotein conducting channel. Has a central role in coupling the hydrolysis of ATP to the transfer of proteins into and across the cell membrane, serving both as a receptor for the preprotein-SecB complex and as an ATP-driven molecular motor driving the stepwise translocation of polypeptide chains across the membrane. The chain is Protein translocase subunit SecA from Janthinobacterium sp. (strain Marseille) (Minibacterium massiliensis).